The chain runs to 244 residues: tRNA (guanine-N(7)-)-methyltransferase (244 aa).

Residues 1–10 (MSDTPQSPAQ) show a composition bias toward polar residues. Residues 1–20 (MSDTPQSPAQDSLAEHDEAR) are disordered. 4 residues coordinate S-adenosyl-L-methionine: glutamate 74, glutamate 99, aspartate 126, and aspartate 149. Residue aspartate 149 is part of the active site. Substrate-binding positions include lysine 153, aspartate 185, and 222-225 (TKFE).

It belongs to the class I-like SAM-binding methyltransferase superfamily. TrmB family.

The catalysed reaction is guanosine(46) in tRNA + S-adenosyl-L-methionine = N(7)-methylguanosine(46) in tRNA + S-adenosyl-L-homocysteine. Its pathway is tRNA modification; N(7)-methylguanine-tRNA biosynthesis. In terms of biological role, catalyzes the formation of N(7)-methylguanine at position 46 (m7G46) in tRNA. In Pseudomonas aeruginosa (strain ATCC 15692 / DSM 22644 / CIP 104116 / JCM 14847 / LMG 12228 / 1C / PRS 101 / PAO1), this protein is tRNA (guanine-N(7)-)-methyltransferase.